A 477-amino-acid polypeptide reads, in one-letter code: MIRRLQDNGDLIRAFPRVHFVGIGGAGMTGIAEVMLTLGYEVSGSDNADNAATRRLATLGARVMRGHSAANVLGTDCVVVSSAIREDNPELMEARSQRIPIMPRAAMLAELMRFRHGIAVAGTHGKTTTTSLIAAVLSEGGLDPTFVIGGQLLAAGANAKLGAGQWLVVEADESDGSFLRLNPLVAVVTNIDADHLENYGNDFSRIKDAFTEFLQRLPFYGLALLCLDDPEVAELAGKARRHVMTYGIDAAADVRAEDVVQDGARMCFTLCLPEGKVIPVTLALPGRHNVLNALAASAVGWQLGVPPEVIGRALKSFVGIGRRFNDLGDVAIGNGACVRLIDDYGHHPRELEAVFAAVRGGWPDKRLVVAFQPHRYSRTRDQFDAFAAVLSSVDALVLSEVYPAGEVPIPGADAKALARAIRARGRSEPVVVGQVASLIEVLPDVLQEGDLLLMMGAGDIGSIAQRIAHDGFVFGEV.

An ATP-binding site is contributed by 122–128 (GTHGKTT).

It belongs to the MurCDEF family.

The protein localises to the cytoplasm. The catalysed reaction is UDP-N-acetyl-alpha-D-muramate + L-alanine + ATP = UDP-N-acetyl-alpha-D-muramoyl-L-alanine + ADP + phosphate + H(+). Its pathway is cell wall biogenesis; peptidoglycan biosynthesis. Its function is as follows. Cell wall formation. The protein is UDP-N-acetylmuramate--L-alanine ligase of Xylella fastidiosa (strain 9a5c).